We begin with the raw amino-acid sequence, 330 residues long: Biotin synthase (330 aa).

Positions Asn-55 to Arg-282 constitute a Radical SAM core domain. [4Fe-4S] cluster is bound by residues Cys-70, Cys-74, and Cys-77. [2Fe-2S] cluster is bound by residues Cys-114, Cys-145, Cys-205, and Arg-277.

This sequence belongs to the radical SAM superfamily. Biotin synthase family. In terms of assembly, homodimer. It depends on [4Fe-4S] cluster as a cofactor. [2Fe-2S] cluster is required as a cofactor.

The catalysed reaction is (4R,5S)-dethiobiotin + (sulfur carrier)-SH + 2 reduced [2Fe-2S]-[ferredoxin] + 2 S-adenosyl-L-methionine = (sulfur carrier)-H + biotin + 2 5'-deoxyadenosine + 2 L-methionine + 2 oxidized [2Fe-2S]-[ferredoxin]. It functions in the pathway cofactor biosynthesis; biotin biosynthesis; biotin from 7,8-diaminononanoate: step 2/2. Its function is as follows. Catalyzes the conversion of dethiobiotin (DTB) to biotin by the insertion of a sulfur atom into dethiobiotin via a radical-based mechanism. This is Biotin synthase from Methylibium petroleiphilum (strain ATCC BAA-1232 / LMG 22953 / PM1).